A 160-amino-acid chain; its full sequence is Prostaglandin E synthase 3 (160 aa).

The CS domain maps to 1 to 90 (MQPASAKWYD…ESGQSWPRLT (90 aa)). The residue at position 33 (K33) is an N6-acetyllysine. K35 is covalently cross-linked (Glycyl lysine isopeptide (Lys-Gly) (interchain with G-Cter in SUMO2)). At S44 the chain carries Phosphoserine. A Glycyl lysine isopeptide (Lys-Gly) (interchain with G-Cter in SUMO2) cross-link involves residue K65. Residues S85, S100, S113, and S118 each carry the phosphoserine modification. Residues 118–160 (SNFDRFSEMMDHMGGDEDVDLPEVDGADDDSQDSDDEKMPDLE) form a disordered region. Positions 122–132 (RFSEMMDHMGG) are enriched in basic and acidic residues. Acidic residues predominate over residues 133 to 153 (DEDVDLPEVDGADDDSQDSDD). Phosphoserine is present on residues S148 and S151. Positions 157-160 (PDLE) match the PXLE motif motif.

Belongs to the p23/wos2 family. As to quaternary structure, probably forms a complex composed of chaperones HSP90 and HSP70, co-chaperones STIP1/HOP, CDC37, PPP5C, PTGES3/p23, TSC1 and client protein TSC2. Binds to the progesterone receptor. Interacts with TERT; the interaction, together with HSP90AA1, is required for correct assembly and stabilization of the telomerase holoenzyme complex. Interacts (via PXLE motif) with EGLN1/PHD2, recruiting EGLN1/PHD2 to the HSP90 pathway to facilitate HIF alpha proteins hydroxylation. Interacts with HSP90AA1, FLCN, FNIP1 and FNIP2. In terms of processing, proteolytically cleaved by caspase-7 (CASP7) in response to apoptosis, leading to its inactivation. As to expression, expressed in testis, kidney, bladder and ovary.

Its subcellular location is the cytoplasm. It catalyses the reaction prostaglandin H2 = prostaglandin E2. The protein operates within lipid metabolism; prostaglandin biosynthesis. In terms of biological role, cytosolic prostaglandin synthase that catalyzes the oxidoreduction of prostaglandin endoperoxide H2 (PGH2) to prostaglandin E2 (PGE2). Molecular chaperone that localizes to genomic response elements in a hormone-dependent manner and disrupts receptor-mediated transcriptional activation, by promoting disassembly of transcriptional regulatory complexes. Facilitates HIF alpha proteins hydroxylation via interaction with EGLN1/PHD2, leading to recruit EGLN1/PHD2 to the HSP90 pathway. The protein is Prostaglandin E synthase 3 (Ptges3) of Mus musculus (Mouse).